The chain runs to 210 residues: Redox-sensing transcriptional repressor Rex (210 aa).

The segment at residues 17-56 (KYHRYLGNLMRNDVDRISSKELSEKIGFTASQIRQDLNCF) is a DNA-binding region (H-T-H motif). 91–96 (GAGNIG) contributes to the NAD(+) binding site.

This sequence belongs to the transcriptional regulatory Rex family. In terms of assembly, homodimer.

Its subcellular location is the cytoplasm. Its function is as follows. Modulates transcription in response to changes in cellular NADH/NAD(+) redox state. In Clostridium kluyveri (strain ATCC 8527 / DSM 555 / NBRC 12016 / NCIMB 10680 / K1), this protein is Redox-sensing transcriptional repressor Rex.